We begin with the raw amino-acid sequence, 253 residues long: 5'-nucleotidase SurE (253 aa).

A divalent metal cation is bound by residues D8, D9, S39, and N95.

It belongs to the SurE nucleotidase family. Requires a divalent metal cation as cofactor.

The protein resides in the cytoplasm. The enzyme catalyses a ribonucleoside 5'-phosphate + H2O = a ribonucleoside + phosphate. Nucleotidase that shows phosphatase activity on nucleoside 5'-monophosphates. This is 5'-nucleotidase SurE from Desulfatibacillum aliphaticivorans.